The chain runs to 290 residues: Lipoyl synthase (290 aa).

The [4Fe-4S] cluster site is built by Cys34, Cys39, Cys45, Cys60, Cys64, Cys67, and Ser273. Residues 46–262 (WNKRHATVMI…KYIAYSKGFL (217 aa)) form the Radical SAM core domain.

It belongs to the radical SAM superfamily. Lipoyl synthase family. It depends on [4Fe-4S] cluster as a cofactor.

It is found in the cytoplasm. The catalysed reaction is [[Fe-S] cluster scaffold protein carrying a second [4Fe-4S](2+) cluster] + N(6)-octanoyl-L-lysyl-[protein] + 2 oxidized [2Fe-2S]-[ferredoxin] + 2 S-adenosyl-L-methionine + 4 H(+) = [[Fe-S] cluster scaffold protein] + N(6)-[(R)-dihydrolipoyl]-L-lysyl-[protein] + 4 Fe(3+) + 2 hydrogen sulfide + 2 5'-deoxyadenosine + 2 L-methionine + 2 reduced [2Fe-2S]-[ferredoxin]. It functions in the pathway protein modification; protein lipoylation via endogenous pathway; protein N(6)-(lipoyl)lysine from octanoyl-[acyl-carrier-protein]: step 2/2. Functionally, catalyzes the radical-mediated insertion of two sulfur atoms into the C-6 and C-8 positions of the octanoyl moiety bound to the lipoyl domains of lipoate-dependent enzymes, thereby converting the octanoylated domains into lipoylated derivatives. The polypeptide is Lipoyl synthase (Wolbachia pipientis subsp. Culex pipiens (strain wPip)).